The sequence spans 173 residues: NADH-quinone oxidoreductase subunit B (173 aa).

The [4Fe-4S] cluster site is built by Cys-46, Cys-47, Cys-112, and Cys-142.

Belongs to the complex I 20 kDa subunit family. NDH-1 is composed of 14 different subunits. Subunits NuoB, C, D, E, F, and G constitute the peripheral sector of the complex. [4Fe-4S] cluster serves as cofactor.

It localises to the cell membrane. The catalysed reaction is a quinone + NADH + 5 H(+)(in) = a quinol + NAD(+) + 4 H(+)(out). Functionally, NDH-1 shuttles electrons from NADH, via FMN and iron-sulfur (Fe-S) centers, to quinones in the respiratory chain. The immediate electron acceptor for the enzyme in this species is believed to be a menaquinone. Couples the redox reaction to proton translocation (for every two electrons transferred, four hydrogen ions are translocated across the cytoplasmic membrane), and thus conserves the redox energy in a proton gradient. The chain is NADH-quinone oxidoreductase subunit B from Desulfitobacterium hafniense (strain DSM 10664 / DCB-2).